Reading from the N-terminus, the 252-residue chain is 3-dehydroquinate dehydratase (252 aa).

3-dehydroquinate is bound by residues Ser21, 46 to 48 (EWR), and Arg82. The active-site Proton donor/acceptor is His143. The active-site Schiff-base intermediate with substrate is the Lys170. Residues Arg213, Ser232, and Gln236 each coordinate 3-dehydroquinate.

It belongs to the type-I 3-dehydroquinase family. In terms of assembly, homodimer.

It catalyses the reaction 3-dehydroquinate = 3-dehydroshikimate + H2O. The protein operates within metabolic intermediate biosynthesis; chorismate biosynthesis; chorismate from D-erythrose 4-phosphate and phosphoenolpyruvate: step 3/7. Functionally, involved in the third step of the chorismate pathway, which leads to the biosynthesis of aromatic amino acids. Catalyzes the cis-dehydration of 3-dehydroquinate (DHQ) and introduces the first double bond of the aromatic ring to yield 3-dehydroshikimate. The protein is 3-dehydroquinate dehydratase of Escherichia coli (strain 55989 / EAEC).